Consider the following 145-residue polypeptide: Protein FAM216B (145 aa).

Positions 92-121 (TKRASAKAGPHRTVPQRAAGRTRTQPSARP) are disordered.

The protein belongs to the FAM216 family.

The protein is Protein FAM216B (FAM216B) of Bos taurus (Bovine).